The primary structure comprises 465 residues: Asparagine--tRNA ligase (465 aa).

Belongs to the class-II aminoacyl-tRNA synthetase family. Homodimer.

The protein resides in the cytoplasm. It carries out the reaction tRNA(Asn) + L-asparagine + ATP = L-asparaginyl-tRNA(Asn) + AMP + diphosphate + H(+). This Clostridium perfringens (strain SM101 / Type A) protein is Asparagine--tRNA ligase.